Consider the following 350-residue polypeptide: Variable large protein 4 (350 aa).

The signal sequence occupies residues 1-18 (MRRRISAIIMTLFMVLVS). C19 carries N-palmitoyl cysteine lipidation. Residue C19 is the site of S-diacylglycerol cysteine attachment.

Belongs to the variable large protein (Vlp) family. Delta subfamily.

Its subcellular location is the cell outer membrane. Functionally, the Vlp and Vsp proteins are antigenically distinct proteins, only one vlp or vsp gene is transcriptionally active at any one time. Switching between these genes is a mechanism of host immune response evasion. The chain is Variable large protein 4 from Borrelia hermsii.